Consider the following 458-residue polypeptide: Exodeoxyribonuclease 7 large subunit (458 aa).

The protein belongs to the XseA family. Heterooligomer composed of large and small subunits.

It localises to the cytoplasm. It catalyses the reaction Exonucleolytic cleavage in either 5'- to 3'- or 3'- to 5'-direction to yield nucleoside 5'-phosphates.. In terms of biological role, bidirectionally degrades single-stranded DNA into large acid-insoluble oligonucleotides, which are then degraded further into small acid-soluble oligonucleotides. The polypeptide is Exodeoxyribonuclease 7 large subunit (Stutzerimonas stutzeri (strain A1501) (Pseudomonas stutzeri)).